A 321-amino-acid chain; its full sequence is Ornithine carbamoyltransferase (321 aa).

Residues 53–56 (STRT), Gln-80, Arg-104, and 131–134 (HPCQ) contribute to the carbamoyl phosphate site. L-ornithine contacts are provided by residues Asn-166, Asp-230, and 234-235 (SM). Carbamoyl phosphate contacts are provided by residues 270–271 (CL) and Arg-298.

This sequence belongs to the aspartate/ornithine carbamoyltransferase superfamily. OTCase family.

Its subcellular location is the cytoplasm. The catalysed reaction is carbamoyl phosphate + L-ornithine = L-citrulline + phosphate + H(+). Its pathway is amino-acid degradation; L-arginine degradation via ADI pathway; carbamoyl phosphate from L-arginine: step 2/2. Functionally, reversibly catalyzes the transfer of the carbamoyl group from carbamoyl phosphate (CP) to the N(epsilon) atom of ornithine (ORN) to produce L-citrulline. This is Ornithine carbamoyltransferase from Bifidobacterium longum subsp. infantis (strain ATCC 15697 / DSM 20088 / JCM 1222 / NCTC 11817 / S12).